Consider the following 404-residue polypeptide: Lysophospholipid transporter LplT (404 aa).

12 helical membrane passes run 16–36 (MIAV…LLFA), 53–73 (ILQM…GQFA), 91–111 (AGAL…LVGV), 139–159 (MMEA…GVLA), 164–184 (GVAL…NMFI), 195–213 (SWRP…LVLW), 227–247 (LFWG…PIAL), 253–273 (ATPT…AGAA), 285–305 (CLPA…QHSM), 310–330 (LLLI…NALL), 350–370 (GENT…KLGV), and 372–392 (VIAV…LLWG).

This sequence belongs to the major facilitator superfamily. LplT (TC 2.A.1.42) family.

Its subcellular location is the cell inner membrane. Its function is as follows. Catalyzes the facilitated diffusion of 2-acyl-glycero-3-phosphoethanolamine (2-acyl-GPE) into the cell. This is Lysophospholipid transporter LplT from Yersinia enterocolitica serotype O:8 / biotype 1B (strain NCTC 13174 / 8081).